The sequence spans 472 residues: Uronate isomerase (472 aa).

The protein belongs to the metallo-dependent hydrolases superfamily. Uronate isomerase family.

The enzyme catalyses D-glucuronate = D-fructuronate. The catalysed reaction is aldehydo-D-galacturonate = keto-D-tagaturonate. Its pathway is carbohydrate metabolism; pentose and glucuronate interconversion. The chain is Uronate isomerase from Nostoc punctiforme (strain ATCC 29133 / PCC 73102).